The following is a 185-amino-acid chain: Large ribosomal subunit protein uL22 (185 aa).

The protein belongs to the universal ribosomal protein uL22 family. Component of the large ribosomal subunit. Mature ribosomes consist of a small (40S) and a large (60S) subunit. The 40S subunit contains about 32 different proteins and 1 molecule of RNA (18S). The 60S subunit contains 45 different proteins and 3 molecules of RNA (25S, 5.8S and 5S).

It localises to the cytoplasm. Its function is as follows. Component of the ribosome, a large ribonucleoprotein complex responsible for the synthesis of proteins in the cell. The small ribosomal subunit (SSU) binds messenger RNAs (mRNAs) and translates the encoded message by selecting cognate aminoacyl-transfer RNA (tRNA) molecules. The large subunit (LSU) contains the ribosomal catalytic site termed the peptidyl transferase center (PTC), which catalyzes the formation of peptide bonds, thereby polymerizing the amino acids delivered by tRNAs into a polypeptide chain. The nascent polypeptides leave the ribosome through a tunnel in the LSU and interact with protein factors that function in enzymatic processing, targeting, and the membrane insertion of nascent chains at the exit of the ribosomal tunnel. The chain is Large ribosomal subunit protein uL22 from Candida albicans (strain SC5314 / ATCC MYA-2876) (Yeast).